The primary structure comprises 397 residues: uncharacterized protein (397 aa).

12 helical membrane-spanning segments follow: residues F10–M30, G48–I68, P76–P96, I106–M126, G141–L161, A165–V185, L209–I229, V242–A262, M274–Y294, A296–L316, V334–L354, and L363–L383.

This sequence belongs to the major facilitator superfamily.

The protein resides in the cell membrane. This is an uncharacterized protein from Bacillus subtilis (strain 168).